Here is a 623-residue protein sequence, read N- to C-terminus: Putative disease resistance protein At5g47280 (623 aa).

NB-ARC domains lie at 2 to 51 (LFNL…VSQS) and 119 to 249 (VDPR…NMLV). 16 to 23 (GMIGSGKT) lines the ATP pocket. 4 LRR repeats span residues 488–511 (SLNSISITNCPNIKELPKNISKLQ), 512–534 (ALQLLRLYACPELKSLPVEICEL), 536–558 (RLVYVDISHCLSLSSLPEKIGNV), and 560–581 (TLEKIDMRECSLSSIPSSAVSL).

The protein belongs to the disease resistance NB-LRR family.

Its function is as follows. Potential disease resistance protein. This Arabidopsis thaliana (Mouse-ear cress) protein is Putative disease resistance protein At5g47280.